The following is a 476-amino-acid chain: Protein transport protein Sec61 subunit alpha (476 aa).

Topologically, residues 2–33 (GIKFLEVIKPFCAVLPEIQKPERKIQFREKVL) are cytoplasmic. Residues 34–53 (WTAITLFIFLVCCQIPLFGI) traverse the membrane as a helical segment. Over 54-76 (MSSDSADPFYWMRVILASNRGTL) the chain is Lumenal. A helical membrane pass occupies residues 77 to 96 (MELGISPIVTSGLIMQLLAG). Topologically, residues 97-117 (AKIIEVGDTPKDRALFNGAQK) are cytoplasmic. Residues 118–138 (LFGMIITIGQAIVYVMTGMYG) traverse the membrane as a helical segment. The Lumenal segment spans residues 139–144 (DPSEMG). A helical membrane pass occupies residues 145–165 (AGICLLIIIQLFVAGLIVLLL). The Cytoplasmic portion of the chain corresponds to 166–172 (DELLQKG). Residues 173–193 (YGLGSGISLFIATNICETIVW) traverse the membrane as a helical segment. The Lumenal segment spans residues 194–240 (KAFSPTTVNTGRGTEFEGAIIALFHLLATRTDKVRALREAFYRQNLP). The helical transmembrane segment at 241-261 (NILNLIATVFVFAVVIYFQGF) threads the bilayer. At 262 to 288 (RVDLPIKSARYRGQYNTYPIKLFYTSN) the chain is on the cytoplasmic side. A helical transmembrane segment spans residues 289–309 (IPIILQSALVSNLYVISQMLS). At 310–354 (TRFSGNFLVNLLGTWSDATSGGPARAYPVAGLCYYLSPPESFGSV) the chain is on the lumenal side. Residues 355–375 (LDDPVHAAIYIVFMLGSCAFF) form a helical membrane-spanning segment. The Cytoplasmic segment spans residues 376-420 (SKTWIEVSGSSAKDVAKQLKEQQMVMRGHRETSMVHELNRYIPTA). Residues 421–441 (AAFGGLCIGGLSVMADFLGAI) traverse the membrane as a helical segment. The Lumenal segment spans residues 442 to 445 (GSGT). A helical transmembrane segment spans residues 446 to 462 (GILLAVTIIYQYFEIFV). The Cytoplasmic segment spans residues 463 to 476 (KEQSEMGSMGALLF).

This sequence belongs to the SecY/SEC61-alpha family. The SEC61 channel-forming translocon complex consists of channel-forming core components SEC61A1, SEC61B and SEC61G and different auxiliary components such as SEC62 and SEC63. The SEC61 channel associates with the multi-pass translocon (MPT) complex.

Its subcellular location is the endoplasmic reticulum membrane. Component of SEC61 channel-forming translocon complex that mediates transport of signal peptide-containing precursor polypeptides across the endoplasmic reticulum (ER). Forms a ribosome receptor and a gated pore in the ER membrane, both functions required for cotranslational translocation of nascent polypeptides. May cooperate with auxiliary protein SEC62, SEC63 and HSPA5/BiP to enable post-translational transport of small presecretory proteins. The SEC61 channel is also involved in ER membrane insertion of transmembrane proteins: it mediates membrane insertion of the first few transmembrane segments of proteins, while insertion of subsequent transmembrane regions of multi-pass membrane proteins is mediated by the multi-pass translocon (MPT) complex. The polypeptide is Protein transport protein Sec61 subunit alpha (sec61a) (Dissostichus mawsoni (Antarctic cod)).